A 259-amino-acid chain; its full sequence is 3'-5' ssDNA/RNA exonuclease TatD (259 aa).

Glutamate 92, histidine 128, and histidine 153 together coordinate a divalent metal cation.

The protein belongs to the metallo-dependent hydrolases superfamily. TatD-type hydrolase family. TatD subfamily. Monomer. Mg(2+) serves as cofactor.

It is found in the cytoplasm. 3'-5' exonuclease that prefers single-stranded DNA and RNA. May play a role in the H(2)O(2)-induced DNA damage repair. This Erwinia tasmaniensis (strain DSM 17950 / CFBP 7177 / CIP 109463 / NCPPB 4357 / Et1/99) protein is 3'-5' ssDNA/RNA exonuclease TatD.